Here is a 233-residue protein sequence, read N- to C-terminus: Uridylate kinase (233 aa).

G9 to S10 is an ATP binding site. G43 lines the UMP pocket. G44 and R48 together coordinate ATP. Residues D65 and V113 to T119 contribute to the UMP site. ATP-binding residues include T139, Y145, and D148.

The protein belongs to the UMP kinase family. As to quaternary structure, homohexamer.

The protein localises to the cytoplasm. It catalyses the reaction UMP + ATP = UDP + ADP. It participates in pyrimidine metabolism; CTP biosynthesis via de novo pathway; UDP from UMP (UMPK route): step 1/1. Its activity is regulated as follows. Inhibited by UTP. Its function is as follows. Catalyzes the reversible phosphorylation of UMP to UDP. This Methanosarcina mazei (strain ATCC BAA-159 / DSM 3647 / Goe1 / Go1 / JCM 11833 / OCM 88) (Methanosarcina frisia) protein is Uridylate kinase.